Consider the following 100-residue polypeptide: MLEHALILGAYLFSIGIYGLVTSRNMVKALMCLELILNAVNLNLVTFSNFFDSRQVKGDIFSIFVIAIAAAEAAIGLAIVLAIYRNRKSTRIDQFNLSKW.

A run of 3 helical transmembrane segments spans residues 1–21 (MLEHALILGAYLFSIGIYGLV), 31–51 (MCLELILNAVNLNLVTFSNFF), and 63–83 (IFVIAIAAAEAAIGLAIVLAI).

It belongs to the complex I subunit 4L family. NDH is composed of at least 16 different subunits, 5 of which are encoded in the nucleus.

It is found in the plastid. The protein resides in the chloroplast thylakoid membrane. The catalysed reaction is a plastoquinone + NADH + (n+1) H(+)(in) = a plastoquinol + NAD(+) + n H(+)(out). It catalyses the reaction a plastoquinone + NADPH + (n+1) H(+)(in) = a plastoquinol + NADP(+) + n H(+)(out). NDH shuttles electrons from NAD(P)H:plastoquinone, via FMN and iron-sulfur (Fe-S) centers, to quinones in the photosynthetic chain and possibly in a chloroplast respiratory chain. The immediate electron acceptor for the enzyme in this species is believed to be plastoquinone. Couples the redox reaction to proton translocation, and thus conserves the redox energy in a proton gradient. In Cryptomeria japonica (Japanese cedar), this protein is NAD(P)H-quinone oxidoreductase subunit 4L, chloroplastic.